Here is a 576-residue protein sequence, read N- to C-terminus: Sulfite reductase [NADPH] hemoprotein beta-component (576 aa).

Positions 439, 445, 485, and 489 each coordinate [4Fe-4S] cluster. Siroheme is bound at residue C489.

It belongs to the nitrite and sulfite reductase 4Fe-4S domain family. In terms of assembly, alpha(8)-beta(8). The alpha component is a flavoprotein, the beta component is a hemoprotein. Siroheme serves as cofactor. It depends on [4Fe-4S] cluster as a cofactor.

It catalyses the reaction hydrogen sulfide + 3 NADP(+) + 3 H2O = sulfite + 3 NADPH + 4 H(+). The protein operates within sulfur metabolism; hydrogen sulfide biosynthesis; hydrogen sulfide from sulfite (NADPH route): step 1/1. Functionally, component of the sulfite reductase complex that catalyzes the 6-electron reduction of sulfite to sulfide. This is one of several activities required for the biosynthesis of L-cysteine from sulfate. The chain is Sulfite reductase [NADPH] hemoprotein beta-component from Aliivibrio salmonicida (strain LFI1238) (Vibrio salmonicida (strain LFI1238)).